The chain runs to 572 residues: mRNA cap guanine-N(7) methyltransferase (572 aa).

Disordered regions lie at residues 1–75 and 110–140; these read MPED…GSRV and EKAI…FPSS. 2 stretches are compositionally biased toward basic and acidic residues: residues 24 to 39 and 59 to 69; these read ANDG…RVHD and SADENKDKKYD. The span at 123-140 shows a compositional bias: low complexity; it reads TTTTPSSTTSSSSSFPSS. One can recognise an mRNA cap 0 methyltransferase domain in the interval 262-571; it reads SPIYKLRNFN…FYVAFVFEKV (310 aa). 271-272 contributes to the mRNA binding site; the sequence is NN. Residues K275, C302, D324, D366, Q396, and Y401 each coordinate S-adenosyl-L-methionine.

The protein belongs to the class I-like SAM-binding methyltransferase superfamily. mRNA cap 0 methyltransferase family.

Its subcellular location is the nucleus. The catalysed reaction is a 5'-end (5'-triphosphoguanosine)-ribonucleoside in mRNA + S-adenosyl-L-methionine = a 5'-end (N(7)-methyl 5'-triphosphoguanosine)-ribonucleoside in mRNA + S-adenosyl-L-homocysteine. In terms of biological role, responsible for methylating the 5'-cap structure of mRNAs. The chain is mRNA cap guanine-N(7) methyltransferase (ABD1) from Lodderomyces elongisporus (strain ATCC 11503 / CBS 2605 / JCM 1781 / NBRC 1676 / NRRL YB-4239) (Yeast).